The chain runs to 616 residues: Dihydroxy-acid dehydratase (616 aa).

A Mg(2+)-binding site is contributed by aspartate 81. A [2Fe-2S] cluster-binding site is contributed by cysteine 122. Mg(2+)-binding residues include aspartate 123 and lysine 124. N6-carboxylysine is present on lysine 124. Residue cysteine 195 coordinates [2Fe-2S] cluster. Glutamate 491 lines the Mg(2+) pocket. Catalysis depends on serine 517, which acts as the Proton acceptor.

This sequence belongs to the IlvD/Edd family. In terms of assembly, homodimer. [2Fe-2S] cluster serves as cofactor. Requires Mg(2+) as cofactor.

It catalyses the reaction (2R)-2,3-dihydroxy-3-methylbutanoate = 3-methyl-2-oxobutanoate + H2O. The enzyme catalyses (2R,3R)-2,3-dihydroxy-3-methylpentanoate = (S)-3-methyl-2-oxopentanoate + H2O. The protein operates within amino-acid biosynthesis; L-isoleucine biosynthesis; L-isoleucine from 2-oxobutanoate: step 3/4. Its pathway is amino-acid biosynthesis; L-valine biosynthesis; L-valine from pyruvate: step 3/4. In terms of biological role, functions in the biosynthesis of branched-chain amino acids. Catalyzes the dehydration of (2R,3R)-2,3-dihydroxy-3-methylpentanoate (2,3-dihydroxy-3-methylvalerate) into 2-oxo-3-methylpentanoate (2-oxo-3-methylvalerate) and of (2R)-2,3-dihydroxy-3-methylbutanoate (2,3-dihydroxyisovalerate) into 2-oxo-3-methylbutanoate (2-oxoisovalerate), the penultimate precursor to L-isoleucine and L-valine, respectively. This chain is Dihydroxy-acid dehydratase, found in Escherichia fergusonii (strain ATCC 35469 / DSM 13698 / CCUG 18766 / IAM 14443 / JCM 21226 / LMG 7866 / NBRC 102419 / NCTC 12128 / CDC 0568-73).